Consider the following 880-residue polypeptide: DNA double-strand break repair Rad50 ATPase (880 aa).

ATP is bound by residues Arg12, 32–38, and Gln138; that span reads NGSGKSS. Coiled coils occupy residues 225–336 and 391–744; these read GELE…VIKE and GEVI…QALN. The region spanning 397 to 494 is the Zinc-hook domain; the sequence is LESLEKERTE…NLRKLEIKLR (98 aa). The Zn(2+) site is built by Cys442 and Cys445. 789 to 794 contributes to the ATP binding site; sequence FLSGGE.

It belongs to the SMC family. RAD50 subfamily. In terms of assembly, homodimer. Forms a heterotetramer composed of two Mre11 subunits and two Rad50 subunits. Zn(2+) is required as a cofactor.

Part of the Rad50/Mre11 complex, which is involved in the early steps of DNA double-strand break (DSB) repair. The complex may facilitate opening of the processed DNA ends to aid in the recruitment of HerA and NurA. Rad50 controls the balance between DNA end bridging and DNA resection via ATP-dependent structural rearrangements of the Rad50/Mre11 complex. The chain is DNA double-strand break repair Rad50 ATPase from Pyrococcus abyssi (strain GE5 / Orsay).